The sequence spans 208 residues: Platelet glycoprotein Ib beta chain (208 aa).

An N-terminal signal peptide occupies residues 1–26; that stretch reads MGSGPRGAVSLLLLMLAPPSCPAADC. Cystine bridges form between cysteine 26–cysteine 32 and cysteine 30–cysteine 39. The region spanning 27–55 is the LRRNT domain; the sequence is PAPCSCAGTLVDCGRRGLTWASLPTSFPV. The Extracellular portion of the chain corresponds to 27-147; the sequence is PAPCSCAGTL…RAACAPGPLC (121 aa). One copy of the LRR repeat lies at 60-83; sequence LVLTGNNLTALPSGLLDALPAVRT. N-linked (GlcNAc...) asparagine glycosylation occurs at asparagine 66. Positions 89–143 constitute an LRRCT domain; it reads NPWRCDCRLVPLRAWLAGRPERAPYRDLRCVAPPAVRGRLLPYLAEDDVRAACAP. Intrachain disulfides connect cysteine 93-cysteine 118 and cysteine 95-cysteine 141. Residues 148–172 traverse the membrane as a helical segment; the sequence is WGALAAELALLGLGLLHALLLVLLL. Residues 173-208 are Cytoplasmic-facing; that stretch reads CRLRRLRARARARARAALRLSLTDPLVAEQDGTDES. Serine 193 is subject to Phosphoserine; by PKA. Phosphothreonine is present on threonine 195.

Two GP-Ib beta are disulfide-linked to one GP-Ib alpha. GP-IX is complexed with the GP-Ib heterodimer via a non covalent linkage. Interacts with TRAF4.

The protein resides in the membrane. In terms of biological role, gp-Ib, a surface membrane protein of platelets, participates in the formation of platelet plugs by binding to von Willebrand factor, which is already bound to the subendothelium. This chain is Platelet glycoprotein Ib beta chain (GP1BB), found in Papio cynocephalus (Yellow baboon).